The primary structure comprises 236 residues: MNSLSYLNHELERFPSPEYALTDPNGLLAIGGDLHPTRLLNAYYEGIFPWFNADDPILWWSPDPRAVFVPGTMKASRSLIKSLKKQTWTFTINRAFKEVMIGCAAPRAAQDGTWITQDIQHAYLELHKQGLAHSVEVWDEETLIGGLYGLAIGQVFCGESMFHTQTNASKAAMLVLHQYLLKQGFKLIDAQVVNPHLESLGATALKRKDFINLLKRFRDGKVASNSWVVKEVFLEL.

This sequence belongs to the L/F-transferase family.

The protein resides in the cytoplasm. It catalyses the reaction N-terminal L-lysyl-[protein] + L-leucyl-tRNA(Leu) = N-terminal L-leucyl-L-lysyl-[protein] + tRNA(Leu) + H(+). The enzyme catalyses N-terminal L-arginyl-[protein] + L-leucyl-tRNA(Leu) = N-terminal L-leucyl-L-arginyl-[protein] + tRNA(Leu) + H(+). The catalysed reaction is L-phenylalanyl-tRNA(Phe) + an N-terminal L-alpha-aminoacyl-[protein] = an N-terminal L-phenylalanyl-L-alpha-aminoacyl-[protein] + tRNA(Phe). Functions in the N-end rule pathway of protein degradation where it conjugates Leu, Phe and, less efficiently, Met from aminoacyl-tRNAs to the N-termini of proteins containing an N-terminal arginine or lysine. The chain is Leucyl/phenylalanyl-tRNA--protein transferase from Shewanella sediminis (strain HAW-EB3).